The primary structure comprises 265 residues: Imidazole glycerol phosphate synthase subunit HisF (265 aa).

Active-site residues include Asp17 and Asp136.

This sequence belongs to the HisA/HisF family. In terms of assembly, heterodimer of HisH and HisF.

The protein resides in the cytoplasm. The enzyme catalyses 5-[(5-phospho-1-deoxy-D-ribulos-1-ylimino)methylamino]-1-(5-phospho-beta-D-ribosyl)imidazole-4-carboxamide + L-glutamine = D-erythro-1-(imidazol-4-yl)glycerol 3-phosphate + 5-amino-1-(5-phospho-beta-D-ribosyl)imidazole-4-carboxamide + L-glutamate + H(+). Its pathway is amino-acid biosynthesis; L-histidine biosynthesis; L-histidine from 5-phospho-alpha-D-ribose 1-diphosphate: step 5/9. Its function is as follows. IGPS catalyzes the conversion of PRFAR and glutamine to IGP, AICAR and glutamate. The HisF subunit catalyzes the cyclization activity that produces IGP and AICAR from PRFAR using the ammonia provided by the HisH subunit. The sequence is that of Imidazole glycerol phosphate synthase subunit HisF from Mycolicibacterium paratuberculosis (strain ATCC BAA-968 / K-10) (Mycobacterium paratuberculosis).